The following is a 734-amino-acid chain: Diacylglycerol kinase alpha (734 aa).

2 EF-hand domains span residues 109 to 144 (RPED…MMRM) and 154 to 189 (ELRP…TVPL). Residues aspartate 122, aspartate 124, asparagine 126, glutamate 133, aspartate 167, aspartate 169, serine 171, serine 173, and glutamate 178 each coordinate Ca(2+). 2 Phorbol-ester/DAG-type zinc fingers span residues 204-252 (QHMW…ALPC) and 268-318 (SHVW…GHEC). Positions 371–505 (SNTHPLLVFV…MDRWSVEVIP (135 aa)) constitute a DAGKc domain. Lysine 483 bears the N6-acetyllysine mark.

Belongs to the eukaryotic diacylglycerol kinase family. In terms of assembly, monomer.

The protein localises to the cytoplasm. It is found in the cytosol. It catalyses the reaction a 1,2-diacyl-sn-glycerol + ATP = a 1,2-diacyl-sn-glycero-3-phosphate + ADP + H(+). The enzyme catalyses a 1-O-alkyl-sn-glycerol + ATP = a 1-O-alkyl-sn-glycero-3-phosphate + ADP + H(+). It carries out the reaction 1-O-alkyl-2-acyl-sn-glycerol + ATP = 1-O-alkyl-2-acyl-sn-glycero-3-phosphate + ADP + H(+). The catalysed reaction is 1,2-dihexadecanoyl-sn-glycerol + ATP = 1,2-dihexadecanoyl-sn-glycero-3-phosphate + ADP + H(+). It catalyses the reaction 1-hexadecanoyl-2-(9Z-octadecenoyl)-sn-glycerol + ATP = 1-hexadecanoyl-2-(9Z-octadecenoyl)-sn-glycero-3-phosphate + ADP + H(+). The enzyme catalyses 2-(9Z-octadecenoyl)-glycerol + ATP = 2-(9Z-octadecenoyl)-sn-glycero-3-phosphate + ADP + H(+). It carries out the reaction 1,2-di-(9Z-octadecenoyl)-sn-glycerol + ATP = 1,2-di-(9Z-octadecenoyl)-sn-glycero-3-phosphate + ADP + H(+). The catalysed reaction is 1-octadecanoyl-2-(5Z,8Z,11Z,14Z-eicosatetraenoyl)-sn-glycerol + ATP = 1-octadecanoyl-2-(5Z,8Z,11Z,14Z-eicosatetraenoyl)-sn-glycero-3-phosphate + ADP + H(+). It catalyses the reaction 1,2-didecanoyl-sn-glycerol + ATP = 1,2-didecanoyl-sn-glycero-3-phosphate + ADP + H(+). The enzyme catalyses 1-O-hexadecyl-2-acetyl-sn-glycerol + ATP = 1-O-hexadecyl-2-acetyl-sn-glycero-3-phosphate + ADP + H(+). It carries out the reaction 1-O-hexadecyl-2-(5Z,8Z,11Z,14Z-eicosatetraenoyl)-sn-glycerol + ATP = 1-O-hexadecyl-2-(5Z,8Z,11Z,14Z-eicosatetraenoyl)-sn-glycero-3-phosphate + ADP + H(+). The catalysed reaction is 1-O-hexadecyl-2-(9Z-octadecenoyl)-sn-glycerol + ATP = 1-O-hexadecyl-2-(9Z-octadecenoyl)-sn-glycero-3-phosphate + ADP + H(+). It catalyses the reaction 1-O-hexadecyl-sn-glycerol + ATP = 1-O-hexadecyl-sn-glycero-3-phosphate + ADP + H(+). It participates in lipid metabolism; glycerolipid metabolism. Its activity is regulated as follows. Stimulated by calcium and phosphatidylserine. Diacylglycerol kinase that converts diacylglycerol/DAG into phosphatidic acid/phosphatidate/PA and regulates the respective levels of these two bioactive lipids. Thereby, acts as a central switch between the signaling pathways activated by these second messengers with different cellular targets and opposite effects in numerous biological processes. Also plays an important role in the biosynthesis of complex lipids. Can also phosphorylate 1-alkyl-2-acylglycerol in vitro as efficiently as diacylglycerol provided it contains an arachidonoyl group. Also involved in the production of alkyl-lysophosphatidic acid, another bioactive lipid, through the phosphorylation of 1-alkyl-2-acetyl glycerol. The protein is Diacylglycerol kinase alpha (DGKA) of Bos taurus (Bovine).